The primary structure comprises 708 residues: Putative adhesion G protein-coupled receptor F2P (708 aa).

At 1–451 the chain is on the extracellular side; the sequence is MGLTAYGNRR…ESLILTYITY (451 aa). 7 N-linked (GlcNAc...) asparagine glycosylation sites follow: Asn21, Asn220, Asn252, Asn260, Asn305, Asn313, and Asn358. The 150-residue stretch at 293–442 folds into the GAIN-B domain; sequence MGTTISGDNI…SILMSPHILE (150 aa). 2 disulfide bridges follow: Cys394-Cys421 and Cys409-Cys423. The segment at 394-442 is GPS; that stretch reads CVGWHSVENRWDQQACKMIQENSQQAVCKCRPSKLFTSFSILMSPHILE. A helical transmembrane segment spans residues 452–472; sequence VGLGISICSLILCLSIEVLVW. Residues 473–487 lie on the Cytoplasmic side of the membrane; the sequence is SQVTKTEITYLRHVC. The chain crosses the membrane as a helical span at residues 488 to 508; sequence IVNIAATLLMADVWFIVASFL. Over 509-530 the chain is Extracellular; sequence SGPITHHKGCVAATFFVHFFYL. Residues 531 to 551 traverse the membrane as a helical segment; the sequence is SVFFWMLAKALLILYGIMIVF. The Cytoplasmic segment spans residues 552-557; it reads HTLPKS. The chain crosses the membrane as a helical span at residues 558-578; that stretch reads VLVASLFSVGYGCPLAIAAIT. Over 579 to 606 the chain is Extracellular; sequence VAATEPGKGYLRPEICWLNWDMTKALLA. The chain crosses the membrane as a helical span at residues 607–627; the sequence is FVIPALAIVVVNLITVTLVIV. The Cytoplasmic segment spans residues 628–650; sequence KTQRAAIGNSMFQEVRAIVRISK. The helical transmembrane segment at 651-671 threads the bilayer; sequence NIAILTPLLGLTWGFGVATVI. Residues 672 to 674 lie on the Extracellular side of the membrane; the sequence is DDR. A helical membrane pass occupies residues 675–695; that stretch reads SLAFHIIFSLLNAFQVSPDAS. Over 696–708 the chain is Cytoplasmic; it reads DQVQSERIHEDVL.

The protein belongs to the G-protein coupled receptor 2 family. Adhesion G-protein coupled receptor (ADGR) subfamily. In terms of tissue distribution, high expression in kidney. Up-regulated in lung adenocarcinomas and prostate cancers.

It localises to the membrane. Functionally, orphan receptor. This chain is Putative adhesion G protein-coupled receptor F2P, found in Homo sapiens (Human).